The following is a 152-amino-acid chain: MEDEEVAESWEEAADSGEIDRRLEKKLKITQKESRKSKSPPKVPIVIQDDSLPTGPPPQIRILKRPTSNGVVSSPNSTSRPALPVKSLAQREAEYAEARRRILGSASPEEEQEKPILDRPTRISQPEDSRQPSNVIRQPLGPDGSQGFKQRR.

M1 is subject to N-acetylmethionine. Residues 30 to 152 (TQKESRKSKS…DGSQGFKQRR (123 aa)) are disordered. Phosphoserine is present on residues S37, S39, and S51. The region spanning 42 to 107 (KVPIVIQDDS…ARRRILGSAS (66 aa)) is the SUZ domain. Residues 66–80 (PTSNGVVSSPNSTSR) show a composition bias toward polar residues. A compositionally biased stretch (basic and acidic residues) spans 89 to 100 (AQREAEYAEARR). Phosphoserine occurs at positions 105 and 107. Positions 111-152 (EQEKPILDRPTRISQPEDSRQPSNVIRQPLGPDGSQGFKQRR) constitute an SUZ-C domain. The segment covering 113–130 (EKPILDRPTRISQPEDSR) has biased composition (basic and acidic residues).

The protein belongs to the SZRD1 family.

This is SUZ RNA-binding domain-containing (Szrd1) from Mus musculus (Mouse).